The primary structure comprises 637 residues: MPIQILPPQLANQIAAGEVVERPASVVKELVENSLDAGATRIQIDIENGGATLIRIRDNGFGIPKEELSLALARHATSKIATIDDLEAILSFGFRGEALASISSVSRLTLTSRTADQQEAWQVFVQGREQESTVNPASHPVGTTVEVANLFFNMPARRKFLRTDKTEFGHIDEVIRRIALAKSHIAFTLTHNGKIVRQYKSAVEDTQKLKRLAAICGNDFVRQALYIDWKHDNLHLSGWVTTPTFARQQNDLSYCYVNGRMVKDKVINHAIRQAYAEHLGSERYPAFVLFLDLNPNDVDVNVHPTKHEVRFQQSRLIHDFIFQGVTNALLSAEQFDFSASTESEKNNEIREPQADYQNVTPTIRPNRAAAGQNMFELNSPTQTKQTNVPITTKAYPTPAHSGQAGYSTTPSNPPPHFMPQSARSVSPFEREKVTKTEQRIYAELLKTPEVEAPPTSIQSSLLSSSSLLHAVALVNNQALLLQRDTAFYLLPLNKLQKMRLELLLTLPNTPQQMLLIPVVFRLSDKQQAQWRQQKIWFEQSGFEFIENPVQHRITLNAVPQCLRHQNLQKIVIALLNRSLQKTEKFLTALLDLVELPDCQVLANAVNILQETELLLDQQTTMKLDNLLIPIDFSSYLS.

It belongs to the DNA mismatch repair MutL/HexB family.

In terms of biological role, this protein is involved in the repair of mismatches in DNA. It is required for dam-dependent methyl-directed DNA mismatch repair. May act as a 'molecular matchmaker', a protein that promotes the formation of a stable complex between two or more DNA-binding proteins in an ATP-dependent manner without itself being part of a final effector complex. This Actinobacillus succinogenes (strain ATCC 55618 / DSM 22257 / CCUG 43843 / 130Z) protein is DNA mismatch repair protein MutL.